Consider the following 202-residue polypeptide: ATP-dependent Clp protease proteolytic subunit (202 aa).

The Nucleophile role is filled by Ser98. His123 is a catalytic residue.

The protein belongs to the peptidase S14 family. In terms of assembly, fourteen ClpP subunits assemble into 2 heptameric rings which stack back to back to give a disk-like structure with a central cavity, resembling the structure of eukaryotic proteasomes.

It localises to the cytoplasm. The enzyme catalyses Hydrolysis of proteins to small peptides in the presence of ATP and magnesium. alpha-casein is the usual test substrate. In the absence of ATP, only oligopeptides shorter than five residues are hydrolyzed (such as succinyl-Leu-Tyr-|-NHMec, and Leu-Tyr-Leu-|-Tyr-Trp, in which cleavage of the -Tyr-|-Leu- and -Tyr-|-Trp bonds also occurs).. Its function is as follows. Cleaves peptides in various proteins in a process that requires ATP hydrolysis. Has a chymotrypsin-like activity. Plays a major role in the degradation of misfolded proteins. In Solidesulfovibrio magneticus (strain ATCC 700980 / DSM 13731 / RS-1) (Desulfovibrio magneticus), this protein is ATP-dependent Clp protease proteolytic subunit.